A 562-amino-acid chain; its full sequence is MSDIAGEARKIALQNAVSHGGRAREGAVLAGLLGARPELRPKAGELMEEISDIVAGINAMPESKQREELGDVPVERKKQEGQALPPLEGAIKGRVVTRFPPEPNGYPHIGHAKAAIINEEYVTMYGGIKILRMDDTNPGAERMEYYAAIKVGLDWLGIEYDVIKNTSDDMDLLLSKGRELLESGDAYVCTCKRDDMSKNRRAMAPCKCSKKAQEDHMEGWDKMHGKFKPGQAVARFRGDMESQNTVMRDPVLFRIMEERHPLLGDRHRVWPSYDMAVAIEDSIDGVTHAFRSKEYELRNELYGAILGKLDMRAPMVLEFSRLEFEGMPVSKRVIRPLIEDGKIPWYDDPRLPTLEGMKKRGITPGAIRRFVISLGLTKADTLAPFGALEAFNRKEIDGNSTRLFLVGDPRRIDVAGLPGTAELPNHPSGDMGSRKIETGGALYLPGKDAEGLSEGGHIRLMGLGDVRIDSAGRDLAGTYTGDDISAGYPKMQWVPCGDARKIKVVIPRAPIKDGEFDSSSLGILEGMVEPHYLQVGDGQSIQFVRFGYCRKESQHMAVFTHG.

Residues Pro-101 to His-111 carry the 'HIGH' region motif.

It belongs to the class-I aminoacyl-tRNA synthetase family. Glutamate--tRNA ligase type 2 subfamily.

The protein localises to the cytoplasm. It carries out the reaction tRNA(Glu) + L-glutamate + ATP = L-glutamyl-tRNA(Glu) + AMP + diphosphate. Functionally, catalyzes the attachment of glutamate to tRNA(Glu) in a two-step reaction: glutamate is first activated by ATP to form Glu-AMP and then transferred to the acceptor end of tRNA(Glu). The sequence is that of Glutamate--tRNA ligase from Cenarchaeum symbiosum (strain A).